A 416-amino-acid chain; its full sequence is Tyrosine--tRNA ligase (416 aa).

Tyr-40 contacts L-tyrosine. A 'HIGH' region motif is present at residues 45–54 (ATAASLHVGH). L-tyrosine contacts are provided by Tyr-177 and Gln-181. Residues 237-241 (KMGKS) carry the 'KMSKS' region motif. Lys-240 contributes to the ATP binding site. An S4 RNA-binding domain is found at 351 to 416 (LSVAHFLVAA…RKKHKLVRLS (66 aa)).

Belongs to the class-I aminoacyl-tRNA synthetase family. TyrS type 1 subfamily. In terms of assembly, homodimer.

The protein localises to the cytoplasm. It catalyses the reaction tRNA(Tyr) + L-tyrosine + ATP = L-tyrosyl-tRNA(Tyr) + AMP + diphosphate + H(+). Catalyzes the attachment of tyrosine to tRNA(Tyr) in a two-step reaction: tyrosine is first activated by ATP to form Tyr-AMP and then transferred to the acceptor end of tRNA(Tyr). The sequence is that of Tyrosine--tRNA ligase from Cereibacter sphaeroides (strain ATCC 17029 / ATH 2.4.9) (Rhodobacter sphaeroides).